Consider the following 1335-residue polypeptide: Xanthine dehydrogenase/oxidase (1335 aa).

Residues D7–I94 form the 2Fe-2S ferredoxin-type domain. [2Fe-2S] cluster is bound by residues C46, C51, C54, C76, C115, C118, C150, and C152. An FAD-binding PCMH-type domain is found at F231–K416. FAD is bound by residues L259–I266, F339, S349–N353, D362, L406, and K424. C538 and C995 are joined by a disulfide. The Mo-molybdopterin site is built by Q770 and F801. Positions 805 and 883 each coordinate substrate. R915 is a Mo-molybdopterin binding site. Residues F917 and T1013 each contribute to the substrate site. Residue A1082 coordinates Mo-molybdopterin. The Proton acceptor role is filled by E1264.

The protein belongs to the xanthine dehydrogenase family. In terms of assembly, homodimer. Interacts with BTN1A1. The cofactor is FAD. Requires Mo-molybdopterin as cofactor. It depends on [2Fe-2S] cluster as a cofactor. Post-translationally, subject to partial proteolysis; this alters the enzyme from the dehydrogenase form (D) to the oxidase form (O). In terms of processing, contains sulfhydryl groups that are easily oxidized (in vitro); this alters the enzyme from the dehydrogenase form (D) to the oxidase form (O).

The protein localises to the cytoplasm. It localises to the peroxisome. Its subcellular location is the secreted. It catalyses the reaction xanthine + NAD(+) + H2O = urate + NADH + H(+). It carries out the reaction hypoxanthine + NAD(+) + H2O = xanthine + NADH + H(+). The catalysed reaction is xanthine + O2 + H2O = urate + H2O2. With respect to regulation, can be converted from the dehydrogenase form (D) to the oxidase form (O) irreversibly by proteolysis or reversibly through the oxidation of sulfhydryl groups. Functionally, key enzyme in purine degradation. Catalyzes the oxidation of hypoxanthine to xanthine. Catalyzes the oxidation of xanthine to uric acid. Contributes to the generation of reactive oxygen species. In Mus musculus (Mouse), this protein is Xanthine dehydrogenase/oxidase (Xdh).